A 130-amino-acid chain; its full sequence is Small ribosomal subunit protein uS11 (130 aa).

A disordered region spans residues 109–130; it reads EDVTPIPHDGTGRPGGKRGRRV.

The protein belongs to the universal ribosomal protein uS11 family. As to quaternary structure, part of the 30S ribosomal subunit.

In terms of biological role, located on the platform of the 30S subunit. The chain is Small ribosomal subunit protein uS11 from Methanosphaera stadtmanae (strain ATCC 43021 / DSM 3091 / JCM 11832 / MCB-3).